The sequence spans 464 residues: Serine carboxypeptidase-like 22 (464 aa).

A signal peptide spans 1 to 22 (MARTHLLFLLFVLLSLATSSTS). 3 N-linked (GlcNAc...) asparagine glycosylation sites follow: Asn52, Asn113, and Asn137. 3 disulfide bridges follow: Cys86-Cys346, Cys247-Cys258, and Cys282-Cys314. Ser179 is a catalytic residue. N-linked (GlcNAc...) asparagine glycans are attached at residues Asn290 and Asn335. Catalysis depends on residues Asp385 and His437.

The protein belongs to the peptidase S10 family. Expression not detected.

The protein localises to the secreted. In terms of biological role, probable carboxypeptidase. The chain is Serine carboxypeptidase-like 22 (SCPL22) from Arabidopsis thaliana (Mouse-ear cress).